A 437-amino-acid chain; its full sequence is NADH-ubiquinone oxidoreductase chain 4 (437 aa).

Transmembrane regions (helical) follow at residues Gly8–Ile28, Leu50–Ile70, Tyr78–Cys98, Phe100–Leu120, Phe132–Leu152, Leu177–Leu197, Leu212–Ile232, Val239–Ile259, Ala266–Met286, Thr297–Leu317, Leu324–Phe344, Leu361–Ile381, and His417–Val437.

This sequence belongs to the complex I subunit 4 family.

It localises to the mitochondrion membrane. The enzyme catalyses a ubiquinone + NADH + 5 H(+)(in) = a ubiquinol + NAD(+) + 4 H(+)(out). Its function is as follows. Core subunit of the mitochondrial membrane respiratory chain NADH dehydrogenase (Complex I) that is believed to belong to the minimal assembly required for catalysis. Complex I functions in the transfer of electrons from NADH to the respiratory chain. The immediate electron acceptor for the enzyme is believed to be ubiquinone. The sequence is that of NADH-ubiquinone oxidoreductase chain 4 (ND4) from Albinaria caerulea (Land snail).